The chain runs to 162 residues: NADH-quinone oxidoreductase subunit I (162 aa).

2 4Fe-4S ferredoxin-type domains span residues 53–83 and 93–122; these read LRRY…IESD and TRYD…ETHI. 8 residues coordinate [4Fe-4S] cluster: C63, C66, C69, C73, C102, C105, C108, and C112.

This sequence belongs to the complex I 23 kDa subunit family. As to quaternary structure, NDH-1 is composed of 14 different subunits. Subunits NuoA, H, J, K, L, M, N constitute the membrane sector of the complex. [4Fe-4S] cluster serves as cofactor.

The protein resides in the cell inner membrane. It carries out the reaction a quinone + NADH + 5 H(+)(in) = a quinol + NAD(+) + 4 H(+)(out). NDH-1 shuttles electrons from NADH, via FMN and iron-sulfur (Fe-S) centers, to quinones in the respiratory chain. The immediate electron acceptor for the enzyme in this species is believed to be ubiquinone. Couples the redox reaction to proton translocation (for every two electrons transferred, four hydrogen ions are translocated across the cytoplasmic membrane), and thus conserves the redox energy in a proton gradient. The chain is NADH-quinone oxidoreductase subunit I from Bordetella avium (strain 197N).